Here is a 276-residue protein sequence, read N- to C-terminus: UPF0328 protein ECU01_0090/ECU01_1520/ECU02_1550/ECU08_0020 (276 aa).

Positions 1–24 (MGIIDVQRSHLTATPSKERDAPAH) are disordered.

Belongs to the UPF0328 family.

In Encephalitozoon cuniculi (strain GB-M1) (Microsporidian parasite), this protein is UPF0328 protein ECU01_0090/ECU01_1520/ECU02_1550/ECU08_0020.